A 432-amino-acid chain; its full sequence is Glutamate-1-semialdehyde 2,1-aminomutase (432 aa).

Residue Lys269 is modified to N6-(pyridoxal phosphate)lysine.

Belongs to the class-III pyridoxal-phosphate-dependent aminotransferase family. HemL subfamily. In terms of assembly, homodimer. The cofactor is pyridoxal 5'-phosphate.

It localises to the cytoplasm. It carries out the reaction (S)-4-amino-5-oxopentanoate = 5-aminolevulinate. The protein operates within porphyrin-containing compound metabolism; protoporphyrin-IX biosynthesis; 5-aminolevulinate from L-glutamyl-tRNA(Glu): step 2/2. This is Glutamate-1-semialdehyde 2,1-aminomutase from Desulforudis audaxviator (strain MP104C).